We begin with the raw amino-acid sequence, 62 residues long: UPF0434 protein RHE_CH03977 (62 aa).

The protein belongs to the UPF0434 family.

This chain is UPF0434 protein RHE_CH03977, found in Rhizobium etli (strain ATCC 51251 / DSM 11541 / JCM 21823 / NBRC 15573 / CFN 42).